The following is a 185-amino-acid chain: Ribosome-recycling factor (185 aa).

This sequence belongs to the RRF family.

It localises to the cytoplasm. Responsible for the release of ribosomes from messenger RNA at the termination of protein biosynthesis. May increase the efficiency of translation by recycling ribosomes from one round of translation to another. This Methylococcus capsulatus (strain ATCC 33009 / NCIMB 11132 / Bath) protein is Ribosome-recycling factor.